Reading from the N-terminus, the 221-residue chain is Intraflagellar transport-associated protein (221 aa).

Phosphoserine is present on S59.

Interacts with IFT122; the interaction associates IFTAP with IFT-A complex.

Seems to play a role in ciliary BBSome localization, maybe through interaction with IFT-A complex. In Homo sapiens (Human), this protein is Intraflagellar transport-associated protein.